The following is a 272-amino-acid chain: Cholesterol 25-hydroxylase (272 aa).

N-linked (GlcNAc...) asparagine glycosylation is present at Asn-5. The next 3 membrane-spanning stretches (helical) occupy residues 38 to 58 (FFPV…FVVL), 84 to 104 (LLPC…PVTL), and 121 to 141 (LLLL…EFFV). A Fatty acid hydroxylase domain is found at 129–263 (LFCLLLFDME…FTHWDKILGT (135 aa)). Residues 142–146 (WHLLH) carry the Histidine box-1 motif. The short motif at 157 to 161 (HKVHH) is the Histidine box-2 element. N-linked (GlcNAc...) asparagine glycans are attached at residues Asn-163 and Asn-189. A Histidine box-3 motif is present at residues 238–244 (HHDLHHS).

The protein belongs to the sterol desaturase family. Requires Fe cation as cofactor. N-glycosylated.

It localises to the endoplasmic reticulum membrane. It carries out the reaction cholesterol + AH2 + O2 = 25-hydroxycholesterol + A + H2O. It catalyses the reaction cholesterol + NADPH + O2 + H(+) = 25-hydroxycholesterol + NADP(+) + H2O. Functionally, catalyzes the formation of 25-hydroxycholesterol from cholesterol, leading to repress cholesterol biosynthetic enzymes. Plays a key role in cell positioning and movement in lymphoid tissues: 25-hydroxycholesterol is an intermediate in biosynthesis of 7-alpha,25-dihydroxycholesterol (7-alpha,25-OHC), an oxysterol that acts as a ligand for the G protein-coupled receptor GPR183/EBI2, a chemotactic receptor for a number of lymphoid cells. May play an important role in regulating lipid metabolism by synthesizing a corepressor that blocks sterol regulatory element binding protein (SREBP) processing. As an interferon-stimulated gene, has broad antiviral activities against a wide range of enveloped viruses, such as vesicular stomatitis virus (VSV) and SARS coronavirus-2 (SARS-CoV-2). Its product, 25-hydroxycholesterol, activates the ER-localized enzyme ACAT to induce internalization of accessible cholesterol on the plasma membrane and restricts SARS-CoV-2 S protein-mediated fusion which inhibits virus replication. In testis, production of 25-hydroxycholesterol by macrophages plays a role in Leydig cell differentiation. Required to restrain inflammation in macrophages: production of 25-hydroxycholesterol protects macrophages from cholesterol overload, thereby preventing mitochondrial DNA release and subsequent activation of the AIM2 inflammasome. The polypeptide is Cholesterol 25-hydroxylase (Homo sapiens (Human)).